A 356-amino-acid chain; its full sequence is Glutamine synthetase PR-1 (356 aa).

The 81-residue stretch at 19 to 99 (VIAEYIWIGG…VICDAYTPAG (81 aa)) folds into the GS beta-grasp domain. Residues 41–64 (PGPVKNPSELPKWNYDGSSTGQAP) are disordered. The region spanning 106–356 (KRHNAAKIFS…IADTTILWKP (251 aa)) is the GS catalytic domain.

This sequence belongs to the glutamine synthetase family. In terms of assembly, homooctamer. As to expression, roots.

The protein resides in the cytoplasm. The enzyme catalyses L-glutamate + NH4(+) + ATP = L-glutamine + ADP + phosphate + H(+). The polypeptide is Glutamine synthetase PR-1 (Phaseolus vulgaris (Kidney bean)).